The primary structure comprises 343 residues: Glyceraldehyde-3-phosphate dehydrogenase 1 (343 aa).

Residues 13 to 14, Asp35, Arg79, and Ser121 contribute to the NAD(+) site; that span reads RI. D-glyceraldehyde 3-phosphate-binding positions include 154-156, Thr185, 214-215, and Arg237; these read SCT and TG. The active-site Nucleophile is the Cys155. NAD(+) is bound at residue Asn319.

This sequence belongs to the glyceraldehyde-3-phosphate dehydrogenase family. Homotetramer.

The protein localises to the cytoplasm. The catalysed reaction is D-glyceraldehyde 3-phosphate + phosphate + NAD(+) = (2R)-3-phospho-glyceroyl phosphate + NADH + H(+). It functions in the pathway carbohydrate degradation; glycolysis; pyruvate from D-glyceraldehyde 3-phosphate: step 1/5. Its function is as follows. Catalyzes the oxidative phosphorylation of glyceraldehyde 3-phosphate (G3P) to 1,3-bisphosphoglycerate (BPG) using the cofactor NAD. The first reaction step involves the formation of a hemiacetal intermediate between G3P and a cysteine residue, and this hemiacetal intermediate is then oxidized to a thioester, with concomitant reduction of NAD to NADH. The reduced NADH is then exchanged with the second NAD, and the thioester is attacked by a nucleophilic inorganic phosphate to produce BPG. This chain is Glyceraldehyde-3-phosphate dehydrogenase 1 (gap1), found in Nostoc sp. (strain PCC 7120 / SAG 25.82 / UTEX 2576).